Here is a 203-residue protein sequence, read N- to C-terminus: Imidazoleglycerol-phosphate dehydratase (203 aa).

The protein belongs to the imidazoleglycerol-phosphate dehydratase family.

It is found in the cytoplasm. It carries out the reaction D-erythro-1-(imidazol-4-yl)glycerol 3-phosphate = 3-(imidazol-4-yl)-2-oxopropyl phosphate + H2O. It participates in amino-acid biosynthesis; L-histidine biosynthesis; L-histidine from 5-phospho-alpha-D-ribose 1-diphosphate: step 6/9. The chain is Imidazoleglycerol-phosphate dehydratase from Deinococcus geothermalis (strain DSM 11300 / CIP 105573 / AG-3a).